Here is a 163-residue protein sequence, read N- to C-terminus: Nucleotide-binding protein Cj0374 (163 aa).

It belongs to the YajQ family.

In terms of biological role, nucleotide-binding protein. The sequence is that of Nucleotide-binding protein Cj0374 from Campylobacter jejuni subsp. jejuni serotype O:2 (strain ATCC 700819 / NCTC 11168).